The chain runs to 418 residues: Homoaconitase large subunit (418 aa).

The [4Fe-4S] cluster site is built by Cys-292, Cys-352, and Cys-355.

This sequence belongs to the aconitase/IPM isomerase family. Heterodimer of HacA and HacB. The cofactor is [4Fe-4S] cluster.

The catalysed reaction is (2R,3S)-homoisocitrate = cis-homoaconitate + H2O. Its pathway is amino-acid biosynthesis; L-lysine biosynthesis via AAA pathway; L-alpha-aminoadipate from 2-oxoglutarate: step 3/5. Is not inhibited by lysine. In terms of biological role, catalyzes the reversible hydration of cis-homoaconitate ((Z)-but-1-ene-1,2,4-tricarboxylate) to homoisocitrate ((1R,2S)-1-hydroxybutane-1,2,4-tricarboxylate). Can catalyze neither the dehydration of (R)-homocitrate ((2R)-2-hydroxybutane-1,2,4-tricarboxylate) into cis-homoaconitate in vitro, nor the reverse reaction. Is not active toward (S)-homocitrate, cis-aconitate or citrate as substrate. This chain is Homoaconitase large subunit (hacA), found in Thermus thermophilus (strain ATCC BAA-163 / DSM 7039 / HB27).